Consider the following 129-residue polypeptide: Large ribosomal subunit protein uL22 (129 aa).

Belongs to the universal ribosomal protein uL22 family. As to quaternary structure, part of the 50S ribosomal subunit.

Functionally, this protein binds specifically to 23S rRNA; its binding is stimulated by other ribosomal proteins, e.g. L4, L17, and L20. It is important during the early stages of 50S assembly. It makes multiple contacts with different domains of the 23S rRNA in the assembled 50S subunit and ribosome. Its function is as follows. The globular domain of the protein is located near the polypeptide exit tunnel on the outside of the subunit, while an extended beta-hairpin is found that lines the wall of the exit tunnel in the center of the 70S ribosome. This chain is Large ribosomal subunit protein uL22, found in Phytoplasma sp. (strain STRAWB2).